A 160-amino-acid polypeptide reads, in one-letter code: UPF0479 membrane protein YLL066W-A (160 aa).

A run of 2 helical transmembrane segments spans residues 39-59 and 136-156; these read IVFC…KVLQ and VPMI…ISQH.

This sequence belongs to the UPF0479 family.

The protein localises to the membrane. In Saccharomyces cerevisiae (strain ATCC 204508 / S288c) (Baker's yeast), this protein is UPF0479 membrane protein YLL066W-A.